A 113-amino-acid chain; its full sequence is Hydrogenase maturation factor HypA (113 aa).

His2 provides a ligand contact to Ni(2+). Zn(2+)-binding residues include Cys70, Cys73, Cys86, and Cys88.

This sequence belongs to the HypA/HybF family.

Involved in the maturation of [NiFe] hydrogenases. Required for nickel insertion into the metal center of the hydrogenase. This Nostoc punctiforme (strain ATCC 29133 / PCC 73102) protein is Hydrogenase maturation factor HypA.